The chain runs to 470 residues: Ubiquitin carboxyl-terminal hydrolase calypso (470 aa).

In terms of domain architecture, UCH catalytic spans 11–241; the sequence is GWLELESDPG…ITHKLKMLRT (231 aa). The Nucleophile role is filled by cysteine 98. Histidine 177 (proton donor) is an active-site residue. The stretch at 260–280 forms a coiled coil; that stretch reads ESRSQAEIRETVDKIKKEEQE. Residues 392-420 enclose the ULD domain; it reads NYDEFICTFLSMLAYQGELGDLVTQHLVT. The segment at 422–470 is positively charged C-terminal tail required for binding nucleosomes; the sequence is RKPSLGGVQNSGSRGVVRNYNKKSTTNGSSPKTPSSKRRRGRTKYRKRK. The span at 423 to 434 shows a compositional bias: polar residues; the sequence is KPSLGGVQNSGS. Positions 423 to 470 are disordered; it reads KPSLGGVQNSGSRGVVRNYNKKSTTNGSSPKTPSSKRRRGRTKYRKRK. Over residues 456–470 the composition is skewed to basic residues; the sequence is SSKRRRGRTKYRKRK.

Belongs to the peptidase C12 family. BAP1 subfamily. As to quaternary structure, catalytic component of the polycomb repressive deubiquitinase (PR-DUB) complex, at least composed of caly/calypso, Asx and sba (MBD5/6 homolog). The PR-DUB complex associates with nucleosomes to mediate deubiquitination of histone H2AK118ub1 substrates; the association requires the positively charged C-terminal tail of caly, probably due to direct binding of DNA. Interacts (via ULD domain) with Asx (via DEUBAD domain); the interaction produces a stable heterodimer with a composite binding site for ubiquitin. Homodimerizes (via coiled-coil hinge-region between the UCH and ULD domains) to mediate assembly of 2 copies of the caly-Asx heterodimer into a bisymmetric tetramer; dimerization enhances PR-DUB association with nucleosomes.

The protein localises to the nucleus. It catalyses the reaction Thiol-dependent hydrolysis of ester, thioester, amide, peptide and isopeptide bonds formed by the C-terminal Gly of ubiquitin (a 76-residue protein attached to proteins as an intracellular targeting signal).. Its function is as follows. Catalytic component of the polycomb repressive deubiquitinase (PR-DUB) complex, a complex that specifically mediates deubiquitination of histone H2A monoubiquitinated at 'Lys-119' (H2AK118ub1). Mediates bisymmetric organization of the PR-DUB complex and is involved in association with nucleosomes to mediate deubiquitination. Does not deubiquitinate monoubiquitinated histone H2B. Required to maintain the transcriptionally repressive state of homeotic genes throughout development. The PR-DUB complex has weak or no activity toward 'Lys-48'- and 'Lys-63'-linked polyubiquitin chains. Polycomb group (PcG) protein. In Culex quinquefasciatus (Southern house mosquito), this protein is Ubiquitin carboxyl-terminal hydrolase calypso.